The following is a 422-amino-acid chain: Dihydroorotase (422 aa).

Residues H59 and H61 each coordinate Zn(2+). Substrate-binding positions include 61-63 and N93; that span reads HFR. Positions 150, 177, and 230 each coordinate Zn(2+). N276 provides a ligand contact to substrate. D303 contributes to the Zn(2+) binding site. Residue D303 is part of the active site. H307 serves as a coordination point for substrate.

This sequence belongs to the metallo-dependent hydrolases superfamily. DHOase family. Class I DHOase subfamily. Zn(2+) serves as cofactor.

The enzyme catalyses (S)-dihydroorotate + H2O = N-carbamoyl-L-aspartate + H(+). Its pathway is pyrimidine metabolism; UMP biosynthesis via de novo pathway; (S)-dihydroorotate from bicarbonate: step 3/3. In terms of biological role, catalyzes the reversible cyclization of carbamoyl aspartate to dihydroorotate. The chain is Dihydroorotase from Streptococcus thermophilus (strain CNRZ 1066).